The primary structure comprises 749 residues: uncharacterized protein (749 aa).

One can recognise a Helicase ATP-binding domain in the interval 63-243 (FQYVQKGESI…QLTGKPMRLV (181 aa)). Residue 76-83 (TPTASGKT) coordinates ATP. A DEVH box motif is present at residues 185-188 (DELH). In terms of domain architecture, Helicase C-terminal spans 276–430 (EVNELAKEFL…SARINPENLI (155 aa)).

It belongs to the helicase family.

This is an uncharacterized protein from Bacillus subtilis (strain 168).